Consider the following 236-residue polypeptide: Carboxymethylenebutenolidase (236 aa).

Catalysis depends on residues Cys123, Asp171, and His202.

This sequence belongs to the dienelactone hydrolase family. In terms of assembly, monomer.

It catalyses the reaction 2-(5-oxo-2,5-dihydrofuran-2-ylidene)acetate + H2O = 4-oxohex-2-enedioate + H(+). It functions in the pathway aromatic compound metabolism; 3-chlorocatechol degradation. Functionally, ring cleavage of cyclic ester dienelactone to produce maleylacetate. This is Carboxymethylenebutenolidase (clcD) from Pseudomonas knackmussii (strain DSM 6978 / CCUG 54928 / LMG 23759 / B13).